The primary structure comprises 88 residues: MSESRNQRKVYQGRVVSDKMDKTITVVVETYKNHKVYGKRVKYSKKFKAHDENNEAKVGDIVKIMETRPLSATKRFRLLEIVEKAVIL.

This sequence belongs to the universal ribosomal protein uS17 family. As to quaternary structure, part of the 30S ribosomal subunit.

Its function is as follows. One of the primary rRNA binding proteins, it binds specifically to the 5'-end of 16S ribosomal RNA. The sequence is that of Small ribosomal subunit protein uS17 from Ligilactobacillus salivarius (strain UCC118) (Lactobacillus salivarius).